Reading from the N-terminus, the 173-residue chain is NADH-ubiquinone oxidoreductase chain 6 (173 aa).

The next 5 membrane-spanning stretches (helical) occupy residues 1 to 21 (MTYF…AVAS), 27 to 47 (YGVV…LSLG), 48 to 68 (VSFV…VVFV), 91 to 111 (GVGF…IGCL), and 141 to 161 (VGMF…VLEL).

Belongs to the complex I subunit 6 family.

The protein resides in the mitochondrion membrane. It carries out the reaction a ubiquinone + NADH + 5 H(+)(in) = a ubiquinol + NAD(+) + 4 H(+)(out). Core subunit of the mitochondrial membrane respiratory chain NADH dehydrogenase (Complex I) that is believed to belong to the minimal assembly required for catalysis. Complex I functions in the transfer of electrons from NADH to the respiratory chain. The immediate electron acceptor for the enzyme is believed to be ubiquinone. In Fratercula arctica (Atlantic puffin), this protein is NADH-ubiquinone oxidoreductase chain 6 (MT-ND6).